We begin with the raw amino-acid sequence, 227 residues long: Cytochrome c oxidase subunit 2 (227 aa).

The Mitochondrial intermembrane portion of the chain corresponds to 1 to 14; the sequence is MAYPFELGFQDATS. A helical transmembrane segment spans residues 15–45; the sequence is PIMEELLHFHDHTLMIVFLISSLVLYIISLM. Topologically, residues 46–59 are mitochondrial matrix; that stretch reads LTTKLTHTSTMDAQ. Residues 60-87 traverse the membrane as a helical segment; it reads EVETIWTILPAIILILIALPSLRVLYMM. Residues 88–227 lie on the Mitochondrial intermembrane side of the membrane; the sequence is DEINDPSLTV…HFENWSSSML (140 aa). Cu cation-binding residues include histidine 161, cysteine 196, glutamate 198, cysteine 200, histidine 204, and methionine 207. Glutamate 198 provides a ligand contact to Mg(2+).

This sequence belongs to the cytochrome c oxidase subunit 2 family. As to quaternary structure, component of the cytochrome c oxidase (complex IV, CIV), a multisubunit enzyme composed of 14 subunits. The complex is composed of a catalytic core of 3 subunits MT-CO1, MT-CO2 and MT-CO3, encoded in the mitochondrial DNA, and 11 supernumerary subunits COX4I, COX5A, COX5B, COX6A, COX6B, COX6C, COX7A, COX7B, COX7C, COX8 and NDUFA4, which are encoded in the nuclear genome. The complex exists as a monomer or a dimer and forms supercomplexes (SCs) in the inner mitochondrial membrane with NADH-ubiquinone oxidoreductase (complex I, CI) and ubiquinol-cytochrome c oxidoreductase (cytochrome b-c1 complex, complex III, CIII), resulting in different assemblies (supercomplex SCI(1)III(2)IV(1) and megacomplex MCI(2)III(2)IV(2)). Found in a complex with TMEM177, COA6, COX18, COX20, SCO1 and SCO2. Interacts with TMEM177 in a COX20-dependent manner. Interacts with COX20. Interacts with COX16. Cu cation is required as a cofactor.

It localises to the mitochondrion inner membrane. The enzyme catalyses 4 Fe(II)-[cytochrome c] + O2 + 8 H(+)(in) = 4 Fe(III)-[cytochrome c] + 2 H2O + 4 H(+)(out). Functionally, component of the cytochrome c oxidase, the last enzyme in the mitochondrial electron transport chain which drives oxidative phosphorylation. The respiratory chain contains 3 multisubunit complexes succinate dehydrogenase (complex II, CII), ubiquinol-cytochrome c oxidoreductase (cytochrome b-c1 complex, complex III, CIII) and cytochrome c oxidase (complex IV, CIV), that cooperate to transfer electrons derived from NADH and succinate to molecular oxygen, creating an electrochemical gradient over the inner membrane that drives transmembrane transport and the ATP synthase. Cytochrome c oxidase is the component of the respiratory chain that catalyzes the reduction of oxygen to water. Electrons originating from reduced cytochrome c in the intermembrane space (IMS) are transferred via the dinuclear copper A center (CU(A)) of subunit 2 and heme A of subunit 1 to the active site in subunit 1, a binuclear center (BNC) formed by heme A3 and copper B (CU(B)). The BNC reduces molecular oxygen to 2 water molecules using 4 electrons from cytochrome c in the IMS and 4 protons from the mitochondrial matrix. The polypeptide is Cytochrome c oxidase subunit 2 (MT-CO2) (Sciurus carolinensis (Eastern gray squirrel)).